Reading from the N-terminus, the 87-residue chain is Toxin Cll5c (87 aa).

The first 19 residues, 1-19, serve as a signal peptide directing secretion; that stretch reads MNSLLMITACLVLFGTVWA. The region spanning 20–85 is the LCN-type CS-alpha/beta domain; the sequence is KEGYLVNKST…TYPLPNKSCS (66 aa). 4 cysteine pairs are disulfide-bonded: cysteine 31–cysteine 84, cysteine 35–cysteine 60, cysteine 44–cysteine 65, and cysteine 48–cysteine 67. The propeptide at 86–87 is removed by a carboxypeptidase; the sequence is KK.

It belongs to the long (4 C-C) scorpion toxin superfamily. Sodium channel inhibitor family. Beta subfamily. Expressed by the venom gland.

It localises to the secreted. Its function is as follows. Beta toxins bind voltage-independently at site-4 of sodium channels (Nav) and shift the voltage of activation toward more negative potentials thereby affecting sodium channel activation and promoting spontaneous and repetitive firing. This Centruroides limpidus (Mexican scorpion) protein is Toxin Cll5c.